A 317-amino-acid chain; its full sequence is Phosphatidylglycerol--prolipoprotein diacylglyceryl transferase 2 (317 aa).

A run of 4 helical transmembrane segments spans residues 19-39 (IPLR…VWLG), 51-71 (GVIA…GRLY), 93-113 (VWEG…GAWI), and 120-140 (IPLP…QAIG). Position 141 (Arg141) interacts with a 1,2-diacyl-sn-glycero-3-phospho-(1'-sn-glycerol). A run of 3 helical transmembrane segments spans residues 180–200 (PTFL…LWAA), 211–230 (FALY…YLRI), and 241–261 (LNNW…VVSA). The disordered stretch occupies residues 275 to 317 (GAGADGRTDDPRPADASVGLASGPPGNSTPRRATESWNVRNRS). Positions 299 to 317 (PGNSTPRRATESWNVRNRS) are enriched in polar residues.

It belongs to the Lgt family.

It localises to the cell membrane. It carries out the reaction L-cysteinyl-[prolipoprotein] + a 1,2-diacyl-sn-glycero-3-phospho-(1'-sn-glycerol) = an S-1,2-diacyl-sn-glyceryl-L-cysteinyl-[prolipoprotein] + sn-glycerol 1-phosphate + H(+). The protein operates within protein modification; lipoprotein biosynthesis (diacylglyceryl transfer). In terms of biological role, catalyzes the transfer of the diacylglyceryl group from phosphatidylglycerol to the sulfhydryl group of the N-terminal cysteine of a prolipoprotein, the first step in the formation of mature lipoproteins. This is Phosphatidylglycerol--prolipoprotein diacylglyceryl transferase 2 from Streptomyces coelicolor (strain ATCC BAA-471 / A3(2) / M145).